We begin with the raw amino-acid sequence, 273 residues long: 3-methyl-2-oxobutanoate hydroxymethyltransferase (273 aa).

Residues Asp-53 and Asp-92 each coordinate Mg(2+). 3-methyl-2-oxobutanoate contacts are provided by residues 53 to 54, Asp-92, and Lys-120; that span reads DS. Residue Glu-122 coordinates Mg(2+). The active-site Proton acceptor is Glu-189.

This sequence belongs to the PanB family. Homodecamer; pentamer of dimers. Mg(2+) is required as a cofactor.

The protein localises to the cytoplasm. The catalysed reaction is 3-methyl-2-oxobutanoate + (6R)-5,10-methylene-5,6,7,8-tetrahydrofolate + H2O = 2-dehydropantoate + (6S)-5,6,7,8-tetrahydrofolate. Its pathway is cofactor biosynthesis; (R)-pantothenate biosynthesis; (R)-pantoate from 3-methyl-2-oxobutanoate: step 1/2. Functionally, catalyzes the reversible reaction in which hydroxymethyl group from 5,10-methylenetetrahydrofolate is transferred onto alpha-ketoisovalerate to form ketopantoate. This Cupriavidus taiwanensis (strain DSM 17343 / BCRC 17206 / CCUG 44338 / CIP 107171 / LMG 19424 / R1) (Ralstonia taiwanensis (strain LMG 19424)) protein is 3-methyl-2-oxobutanoate hydroxymethyltransferase.